A 396-amino-acid chain; its full sequence is Putative carbamoyltransferase YgeW (396 aa).

Carbamoyl phosphate contacts are provided by residues 71–74 (STRT), glutamine 98, 165–168 (HPTQ), and 330–331 (CL).

Belongs to the aspartate/ornithine carbamoyltransferase superfamily. Homotrimer.

This Escherichia coli O6:H1 (strain CFT073 / ATCC 700928 / UPEC) protein is Putative carbamoyltransferase YgeW (ygeW).